Reading from the N-terminus, the 487-residue chain is Inosine-5'-monophosphate dehydrogenase (487 aa).

CBS domains are found at residues 93-149 and 153-214; these read IVSD…NKTV and MTPK…CKDE. Residues Asp-248, 248–250, and 298–300 each bind NAD(+); these read DSS and GIG. K(+) is bound by residues Gly-300 and Gly-302. Ser-303 provides a ligand contact to IMP. Residue Cys-305 coordinates K(+). The active-site Thioimidate intermediate is Cys-305. IMP contacts are provided by residues 338-340, 361-362, and 385-389; these read DGG, GS, and YRGMG. Arg-401 acts as the Proton acceptor in catalysis. Position 415 (Glu-415) interacts with IMP. Residues Glu-469, Ser-470, and His-471 each coordinate K(+).

Belongs to the IMPDH/GMPR family. As to quaternary structure, homotetramer. The cofactor is K(+).

It catalyses the reaction IMP + NAD(+) + H2O = XMP + NADH + H(+). It functions in the pathway purine metabolism; XMP biosynthesis via de novo pathway; XMP from IMP: step 1/1. Its activity is regulated as follows. Mycophenolic acid (MPA) is a non-competitive inhibitor that prevents formation of the closed enzyme conformation by binding to the same site as the amobile flap. In contrast, mizoribine monophosphate (MZP) is a competitive inhibitor that induces the closed conformation. MPA is a potent inhibitor of mammalian IMPDHs but a poor inhibitor of the bacterial enzymes. MZP is a more potent inhibitor of bacterial IMPDH. Catalyzes the conversion of inosine 5'-phosphate (IMP) to xanthosine 5'-phosphate (XMP), the first committed and rate-limiting step in the de novo synthesis of guanine nucleotides, and therefore plays an important role in the regulation of cell growth. The polypeptide is Inosine-5'-monophosphate dehydrogenase (Pasteurella multocida (strain Pm70)).